Consider the following 100-residue polypeptide: uncharacterized protein (100 aa).

The tract at residues 78–100 is disordered; that stretch reads NNGNLDFKGRADERRQPVSNLRM. Basic and acidic residues predominate over residues 84–93; sequence FKGRADERRQ.

This is an uncharacterized protein from Saccharomyces cerevisiae (strain ATCC 204508 / S288c) (Baker's yeast).